The following is a 53-amino-acid chain: Bowman-Birk type proteinase inhibitor 1 (53 aa).

5 disulfides stabilise this stretch: cysteine 9/cysteine 24, cysteine 12/cysteine 51, cysteine 14/cysteine 22, cysteine 31/cysteine 38, and cysteine 40/cysteine 48.

In terms of assembly, dimer.

Inhibits trypsin (IC(50)=6.20 nM), neutrophil elastase (ELANE) and, to a lesser extent, alpha-chymotrypsin (IC(50)=3.44 uM). This chain is Bowman-Birk type proteinase inhibitor 1, found in Lathyrus sativus (White vetchling).